Reading from the N-terminus, the 331-residue chain is Ketol-acid reductoisomerase (NADP(+)) (331 aa).

The 180-residue stretch at 2–181 folds into the KARI N-terminal Rossmann domain; it reads IKKYYESDAD…GATRAVVFET (180 aa). Residues 25-28, Arg-48, Ser-52, and 82-85 each bind NADP(+); these read YGSQ and DESQ. His-107 is an active-site residue. Gly-133 contacts NADP(+). One can recognise a KARI C-terminal knotted domain in the interval 182 to 327; that stretch reads TFREETETDL…AEIRGLMPQF (146 aa). 4 residues coordinate Mg(2+): Asp-190, Glu-194, Glu-226, and Glu-230. Substrate is bound at residue Ser-251.

This sequence belongs to the ketol-acid reductoisomerase family. Mg(2+) is required as a cofactor.

The catalysed reaction is (2R)-2,3-dihydroxy-3-methylbutanoate + NADP(+) = (2S)-2-acetolactate + NADPH + H(+). It catalyses the reaction (2R,3R)-2,3-dihydroxy-3-methylpentanoate + NADP(+) = (S)-2-ethyl-2-hydroxy-3-oxobutanoate + NADPH + H(+). It functions in the pathway amino-acid biosynthesis; L-isoleucine biosynthesis; L-isoleucine from 2-oxobutanoate: step 2/4. The protein operates within amino-acid biosynthesis; L-valine biosynthesis; L-valine from pyruvate: step 2/4. Its function is as follows. Involved in the biosynthesis of branched-chain amino acids (BCAA). Catalyzes an alkyl-migration followed by a ketol-acid reduction of (S)-2-acetolactate (S2AL) to yield (R)-2,3-dihydroxy-isovalerate. In the isomerase reaction, S2AL is rearranged via a Mg-dependent methyl migration to produce 3-hydroxy-3-methyl-2-ketobutyrate (HMKB). In the reductase reaction, this 2-ketoacid undergoes a metal-dependent reduction by NADPH to yield (R)-2,3-dihydroxy-isovalerate. The sequence is that of Ketol-acid reductoisomerase (NADP(+)) from Methanosphaerula palustris (strain ATCC BAA-1556 / DSM 19958 / E1-9c).